We begin with the raw amino-acid sequence, 226 residues long: Lysoplasmalogenase TMEM86B (226 aa).

The Cytoplasmic portion of the chain corresponds to 1–23 (MDARKEGLPLETLFSDQYPQVRR). Residues 24–40 (WLAPFILACSLYFLLWI) traverse the membrane as a helical segment. The Extracellular portion of the chain corresponds to 41–46 (PVDQPS). Residues 47-68 (WVSALIKCQPILCLVVFLWAVA) form a helical membrane-spanning segment. At 69 to 74 (PGGSST) the chain is on the cytoplasmic side. A helical transmembrane segment spans residues 75-93 (WLLQGALVCSAVGDACLIW). The Extracellular segment spans residues 94 to 99 (PEAFFY). The helical transmembrane segment at 100–117 (GTAAFSVAHLFYLGAFGL) threads the bilayer. At 118-123 (TPLQPG) the chain is on the cytoplasmic side. A helical transmembrane segment spans residues 124-140 (LLLCTTLASLTYYSFLL). The Extracellular segment spans residues 141 to 146 (LHLEQG). A helical membrane pass occupies residues 147–163 (MVLPVMAYGLILNSMLW). At 164 to 171 (RSLVWGGS) the chain is on the cytoplasmic side. Residues 172 to 188 (ASWGAVLFTFSDGVLAW) form a helical membrane-spanning segment. Topologically, residues 189-199 (DTFVYSLPFAR) are extracellular. The chain crosses the membrane as a helical span at residues 200 to 218 (LVTMSTYYAAQLLLILSAL). Over 219–226 (RNPGLKTH) the chain is Cytoplasmic.

Belongs to the TMEM86 family. Homodimer. Enriched in liver. Also detected in brain and testis.

It is found in the endoplasmic reticulum membrane. It localises to the cytoplasm. It catalyses the reaction a 1-O-(1Z-alkenyl)-sn-glycero-3-phosphocholine + H2O = a 2,3-saturated aldehyde + sn-glycerol 3-phosphocholine. The enzyme catalyses a 1-O-(1Z-alkenyl)-sn-glycero-3-phosphoethanolamine + H2O = a 2,3-saturated aldehyde + sn-glycero-3-phosphoethanolamine. Its activity is regulated as follows. Competitively inhibited by lysophosphatidic acid. Functionally, catalyzes the hydrolysis of the vinyl ether bond of choline or ethanolamine lysoplasmalogens, forming fatty aldehyde and glycerophosphocholine or glycerophosphoethanolamine, respectively and is specific for the sn-2-deacylated (lyso) form of plasmalogen. In Mus musculus (Mouse), this protein is Lysoplasmalogenase TMEM86B (Tmem86b).